The following is a 491-amino-acid chain: ATP synthase subunit beta, chloroplastic (491 aa).

172 to 179 is a binding site for ATP; the sequence is GGAGVGKT.

This sequence belongs to the ATPase alpha/beta chains family. As to quaternary structure, F-type ATPases have 2 components, CF(1) - the catalytic core - and CF(0) - the membrane proton channel. CF(1) has five subunits: alpha(3), beta(3), gamma(1), delta(1), epsilon(1). CF(0) has four main subunits: a(1), b(1), b'(1) and c(9-12).

It is found in the plastid. It localises to the chloroplast thylakoid membrane. It carries out the reaction ATP + H2O + 4 H(+)(in) = ADP + phosphate + 5 H(+)(out). In terms of biological role, produces ATP from ADP in the presence of a proton gradient across the membrane. The catalytic sites are hosted primarily by the beta subunits. The chain is ATP synthase subunit beta, chloroplastic from Pisum sativum (Garden pea).